The following is a 66-amino-acid chain: UPF0337 protein spyM18_1212 (66 aa).

Belongs to the UPF0337 (CsbD) family.

In Streptococcus pyogenes serotype M18 (strain MGAS8232), this protein is UPF0337 protein spyM18_1212.